The chain runs to 271 residues: 5-deoxy-glucuronate isomerase (271 aa).

This sequence belongs to the isomerase IolB family.

The catalysed reaction is 5-deoxy-D-glucuronate = 5-dehydro-2-deoxy-D-gluconate. Its pathway is polyol metabolism; myo-inositol degradation into acetyl-CoA; acetyl-CoA from myo-inositol: step 4/7. Involved in the isomerization of 5-deoxy-glucuronate (5DG) to 5-dehydro-2-deoxy-D-gluconate (DKG or 2-deoxy-5-keto-D-gluconate). In Bacillus subtilis subsp. natto, this protein is 5-deoxy-glucuronate isomerase.